The sequence spans 550 residues: Hydroxylamine reductase (550 aa).

[2Fe-2S] cluster-binding residues include Cys3, Cys6, Cys18, and Cys25. Hybrid [4Fe-2O-2S] cluster contacts are provided by His249, Glu273, Cys317, Cys405, Cys433, Cys458, Glu492, and Lys494. At Cys405 the chain carries Cysteine persulfide.

The protein belongs to the HCP family. Requires [2Fe-2S] cluster as cofactor. It depends on hybrid [4Fe-2O-2S] cluster as a cofactor.

Its subcellular location is the cytoplasm. It catalyses the reaction A + NH4(+) + H2O = hydroxylamine + AH2 + H(+). In terms of biological role, catalyzes the reduction of hydroxylamine to form NH(3) and H(2)O. This Enterobacter sp. (strain 638) protein is Hydroxylamine reductase.